The sequence spans 1145 residues: DNA mismatch repair protein msh-3 (1145 aa).

Disordered stretches follow at residues 1–183 and 857–879; these read MAGP…GAKT and SSSASSPDPNPTSPSGKPALAQL. A compositionally biased stretch (polar residues) spans 13-33; it reads ASISSFFTPRNTSPLVNLSQN. A compositionally biased stretch (basic and acidic residues) spans 121-131; the sequence is AERKKKEELHR. A compositionally biased stretch (acidic residues) spans 158–169; it reads GEGEEGEDDEEE. A mispair-binding domain region spans residues 183–307; it reads TGKLTPMELQ…RKLTNVYTKG (125 aa). 882–889 provides a ligand contact to ATP; that stretch reads GPNMGGKS. Residues 1030-1056 form a disordered region; that stretch reads KSRTSMDDDAMEVDGDGDGQEGAGADK. Positions 1036–1048 are enriched in acidic residues; the sequence is DDDAMEVDGDGDG.

The protein belongs to the DNA mismatch repair MutS family. MSH3 subfamily. Heterodimer consisting of msh-2-msh-3 (MutS beta). Forms a ternary complex with MutL alpha (mlh-1-pms-1).

The protein resides in the nucleus. Component of the post-replicative DNA mismatch repair system (MMR). Heterodimerizes with msh-2 to form MutS beta, which binds to DNA mismatches thereby initiating DNA repair. Msh-3 provides substrate-binding and substrate specificity to the complex. When bound, the MutS beta heterodimer bends the DNA helix and shields approximately 20 base pairs. Acts mainly to repair insertion-deletion loops (IDLs) from 2 to 13 nucleotides in size, but can also repair base-base and single insertion-deletion mismatches that occur during replication. After mismatch binding, forms a ternary complex with the MutL alpha heterodimer, which is thought to be responsible for directing the downstream MMR events, including strand discrimination, excision, and resynthesis. ATP binding and hydrolysis play a pivotal role in mismatch repair functions. In Neurospora crassa (strain ATCC 24698 / 74-OR23-1A / CBS 708.71 / DSM 1257 / FGSC 987), this protein is DNA mismatch repair protein msh-3 (msh-3).